We begin with the raw amino-acid sequence, 173 residues long: Photosystem I assembly protein Ycf3 (173 aa).

3 TPR repeats span residues 35–68, 72–105, and 120–153; these read AFVY…EENP, SYIL…NPKM, and GEKA…APNN.

Belongs to the Ycf3 family.

It localises to the cellular thylakoid membrane. In terms of biological role, essential for the assembly of the photosystem I (PSI) complex. May act as a chaperone-like factor to guide the assembly of the PSI subunits. In Synechocystis sp. (strain ATCC 27184 / PCC 6803 / Kazusa), this protein is Photosystem I assembly protein Ycf3.